A 410-amino-acid polypeptide reads, in one-letter code: Protein CNPPD1 (410 aa).

A helical membrane pass occupies residues 233-253; that stretch reads CLLAVAYVSSVALAVASVAVI.

Belongs to the CNPPD1 family.

The protein localises to the membrane. The protein is Protein CNPPD1 (CNPPD1) of Homo sapiens (Human).